Consider the following 351-residue polypeptide: MSASTTATLRHDWTLAEVKALFVQPFNDLLFQAQTVHRAHFDANRVQVSTLLSIKTGACPEDCKYCPQSGHYNTGLEKEKLMEVQKVLEEAARAKAIGSTRFCMGAAWKHPSAKDMPYVLKMVEGVKAMGLETCMTLGRLDQDQTEALAKAGLDYYNHNLDTSPEFYGSIITTRTYAERLQTLAYVRDAGMKICSGGILGMGESLDDRANLLIQLANLPEHPESVPINMLVKVAGTPLENADDVDPFDFIRMLAVARILMPQSHVRLSAGREAMNEQMQALAFFAGANSIFYGDKLLTTANPQADKDMQLFARLGIQPEAREEHADEVHQAAIEQALVEQKSSEQFYNAAV.

A Radical SAM core domain is found at 44–262 (NRVQVSTLLS…LAVARILMPQ (219 aa)). [4Fe-4S] cluster-binding residues include cysteine 59, cysteine 63, and cysteine 66. [2Fe-2S] cluster-binding residues include cysteine 103, cysteine 134, cysteine 194, and arginine 266.

Belongs to the radical SAM superfamily. Biotin synthase family. Homodimer. Requires [4Fe-4S] cluster as cofactor. [2Fe-2S] cluster serves as cofactor.

It catalyses the reaction (4R,5S)-dethiobiotin + (sulfur carrier)-SH + 2 reduced [2Fe-2S]-[ferredoxin] + 2 S-adenosyl-L-methionine = (sulfur carrier)-H + biotin + 2 5'-deoxyadenosine + 2 L-methionine + 2 oxidized [2Fe-2S]-[ferredoxin]. It participates in cofactor biosynthesis; biotin biosynthesis; biotin from 7,8-diaminononanoate: step 2/2. In terms of biological role, catalyzes the conversion of dethiobiotin (DTB) to biotin by the insertion of a sulfur atom into dethiobiotin via a radical-based mechanism. The protein is Biotin synthase of Pseudomonas fluorescens (strain Pf0-1).